A 433-amino-acid chain; its full sequence is Inorganic triphosphatase (433 aa).

The CYTH domain maps to 2–202 (AQEIELKFIV…ARGYHLAQGN (201 aa)). Positions 218–433 (KADVEQGLEA…EPFWLHSGKR (216 aa)) constitute a CHAD domain.

It catalyses the reaction triphosphate + H2O = phosphate + diphosphate. Inhibited by calcium ion and activated by magnesium ion. In terms of biological role, involved in the hydrolysis of the beta-gamma-phosphoanhydride linkage of triphosphate-containing substrates (inorganic or nucleoside-linked). Catalyzes the hydrolysis of inorganic triphosphate (PPPi), which could be cytotoxic because of its high affinity for calcium ion, thereby interfering with calcium signaling. It also hydrolyzes slowly thiamine triphosphate (ThTP). YgiF is a specific PPPase, but it contributes only marginally to the total PPPase activity in E.coli, where the main enzyme responsible for hydrolysis of PPPi is inorganic pyrophosphatase (PPase). This chain is Inorganic triphosphatase (ygiF), found in Escherichia coli (strain K12).